The primary structure comprises 193 residues: Holliday junction branch migration complex subunit RuvA (193 aa).

The tract at residues 1 to 64 (MIGRIAGVLL…EDAHLLYGFG (64 aa)) is domain I. Positions 65–139 (TAEERSTFRE…GKIGADLGAM (75 aa)) are domain II. Residues 139–143 (MAGAA) are flexible linker. The segment at 144 to 193 (SASDHASDILNALLALGYSEKEALAAVKNVPAGTGVSEGIKLALKALSKG) is domain III.

The protein belongs to the RuvA family. As to quaternary structure, homotetramer. Forms an RuvA(8)-RuvB(12)-Holliday junction (HJ) complex. HJ DNA is sandwiched between 2 RuvA tetramers; dsDNA enters through RuvA and exits via RuvB. An RuvB hexamer assembles on each DNA strand where it exits the tetramer. Each RuvB hexamer is contacted by two RuvA subunits (via domain III) on 2 adjacent RuvB subunits; this complex drives branch migration. In the full resolvosome a probable DNA-RuvA(4)-RuvB(12)-RuvC(2) complex forms which resolves the HJ.

It is found in the cytoplasm. The RuvA-RuvB-RuvC complex processes Holliday junction (HJ) DNA during genetic recombination and DNA repair, while the RuvA-RuvB complex plays an important role in the rescue of blocked DNA replication forks via replication fork reversal (RFR). RuvA specifically binds to HJ cruciform DNA, conferring on it an open structure. The RuvB hexamer acts as an ATP-dependent pump, pulling dsDNA into and through the RuvAB complex. HJ branch migration allows RuvC to scan DNA until it finds its consensus sequence, where it cleaves and resolves the cruciform DNA. This chain is Holliday junction branch migration complex subunit RuvA, found in Paraburkholderia xenovorans (strain LB400).